Reading from the N-terminus, the 411-residue chain is Lissencephaly-1 homolog (411 aa).

Residues 9 to 41 form the LisH domain; the sequence is QREELNQAIADYLGSNGYADSLETFRKEADLST. Positions 56-83 form a coiled coil; the sequence is TSVIRLQKKVMDLEAKLTEAEKEVIEGA. WD repeat units lie at residues 106–147, 148–187, 191–230, 233–272, 275–334, 337–376, and 379–411; these read GHRA…RSLK, GHTD…ECVK, GHDH…CVKT, GHRE…CKVE, DHEH…CLLT, GHDN…CMKT, and AHQH…WECR.

It belongs to the WD repeat LIS1/nudF family.

It localises to the cytoplasm. The protein localises to the cytoskeleton. The protein resides in the microtubule organizing center. It is found in the centrosome. Functionally, positively regulates the activity of the minus-end directed microtubule motor protein dynein. May enhance dynein-mediated microtubule sliding by targeting dynein to the microtubule plus end. Required for several dynein- and microtubule-dependent processes. In Drosophila mojavensis (Fruit fly), this protein is Lissencephaly-1 homolog.